Here is a 425-residue protein sequence, read N- to C-terminus: Rho GTPase-activating protein 8 (425 aa).

The CRAL-TRIO domain maps to 13 to 168; that stretch reads PFYDVARHGI…EVVRYDEKLQ (156 aa). The disordered stretch occupies residues 169 to 192; that stretch reads NLHKGQPPPPTKTPPPRPPLPTQQ. The segment covering 174 to 189 has biased composition (pro residues); sequence QPPPPTKTPPPRPPLP. The Rho-GAP domain occupies 195–381; it reads VSLQYLRDKN…LLIEYYDKVF (187 aa).

As to expression, highly expressed in skeletal muscle, lung and testis, and at lower levels in kidney, stomach and colon. Not detected in heart, liver, spleen, breast, brain, neonatal head or pancreas.

GTPase activator for the Rho-type GTPases by converting them to an inactive GDP-bound state. The protein is Rho GTPase-activating protein 8 (Arhgap8) of Mus musculus (Mouse).